An 81-amino-acid polypeptide reads, in one-letter code: D-alanyl carrier protein (81 aa).

Residues 1 to 81 (MADEAIKNGV…KIIAKVEQAQ (81 aa)) form the Carrier domain. Position 39 is an O-(pantetheine 4'-phosphoryl)serine (Ser-39).

Belongs to the DltC family. In terms of processing, 4'-phosphopantetheine is transferred from CoA to a specific serine of apo-DCP.

The protein resides in the cytoplasm. It functions in the pathway cell wall biogenesis; lipoteichoic acid biosynthesis. Carrier protein involved in the D-alanylation of lipoteichoic acid (LTA). The loading of thioester-linked D-alanine onto DltC is catalyzed by D-alanine--D-alanyl carrier protein ligase DltA. The DltC-carried D-alanyl group is further transferred to cell membrane phosphatidylglycerol (PG) by forming an ester bond, probably catalyzed by DltD. D-alanylation of LTA plays an important role in modulating the properties of the cell wall in Gram-positive bacteria, influencing the net charge of the cell wall. This chain is D-alanyl carrier protein, found in Lacticaseibacillus casei (strain BL23) (Lactobacillus casei).